We begin with the raw amino-acid sequence, 231 residues long: Staphylococcal superantigen-like 7 (231 aa).

Positions 1 to 30 (MKLKTLAKATLALGLLTTGVITSEGQAVQA) are cleaved as a signal peptide.

The protein belongs to the staphylococcal/streptococcal toxin family. As to quaternary structure, interacts with host IgA and complement C5; these interactions inhibits complement activation.

Its subcellular location is the secreted. Plays a role in the inhibition of host complement-mediated lysis and serum bactericidal activity by interacting with complement component C5. Affects all three pathways of complement activation and inhibits the cleavage of C5 by preventing its binding to C5 convertases. In turn, prevents C5a-mediated neutrophil migration. The sequence is that of Staphylococcal superantigen-like 7 from Staphylococcus aureus (strain NCTC 8325 / PS 47).